Reading from the N-terminus, the 221-residue chain is CASP-like protein 2U10 (221 aa).

Residues 1–22 (MDSSSKPMNGSAGGSPVGDERK) are disordered. Over 1–31 (MDSSSKPMNGSAGGSPVGDERKMGDHEHEFR) the chain is Cytoplasmic. Residues 32 to 52 (ISIILLRSFLLVLVIISEALM) traverse the membrane as a helical segment. Topologically, residues 53-91 (VTDRETGSVPLPFFGLPRPVFVTKTAKYELVTGLKFYVD) are extracellular. A helical transmembrane segment spans residues 92–112 (ALGVVIGYTVLHLLFNIGLVA). Over 113–122 (TKGTVVDCKS) the chain is Cytoplasmic. Residues 123 to 143 (VAWISFIADSMMGYLLLSSAA) form a helical membrane-spanning segment. The Extracellular segment spans residues 144–174 (VATEIGYLAEEGAPAVLWRKVCNAFGYFCTV). A helical transmembrane segment spans residues 175–195 (YAISVVICFIAALVSFVVVGI). Over 196 to 221 (SAYHLFRLYGIQQQAAREKEKLSAEM) the chain is Cytoplasmic.

This sequence belongs to the Casparian strip membrane proteins (CASP) family. In terms of assembly, homodimer and heterodimers.

The protein resides in the cell membrane. The protein is CASP-like protein 2U10 of Selaginella moellendorffii (Spikemoss).